The following is a 370-amino-acid chain: Histidinol-phosphate aminotransferase 1 (370 aa).

An N6-(pyridoxal phosphate)lysine modification is found at K222.

This sequence belongs to the class-II pyridoxal-phosphate-dependent aminotransferase family. Histidinol-phosphate aminotransferase subfamily. Homodimer. The cofactor is pyridoxal 5'-phosphate.

The catalysed reaction is L-histidinol phosphate + 2-oxoglutarate = 3-(imidazol-4-yl)-2-oxopropyl phosphate + L-glutamate. Its pathway is amino-acid biosynthesis; L-histidine biosynthesis; L-histidine from 5-phospho-alpha-D-ribose 1-diphosphate: step 7/9. The protein is Histidinol-phosphate aminotransferase 1 of Bacillus cereus (strain ATCC 10987 / NRS 248).